The primary structure comprises 354 residues: Rhodopsin (354 aa).

Residues 1 to 36 (MNGTEGENFYIPMSNKTGVVRSPFDYPQYYLAEPWK) lie on the Extracellular side of the membrane. 2 N-linked (GlcNAc...) asparagine glycosylation sites follow: N2 and N15. The helical transmembrane segment at 37–61 (FSVLAAYMFFLIIAGFPVNFLTLYV) threads the bilayer. Over 62–73 (TIQHKKLRQPLN) the chain is Cytoplasmic. Residues 74 to 96 (YILLNLAVADLFMIFGGFPSTMI) traverse the membrane as a helical segment. Residues 97–110 (TSMNGYFVFGPSGC) lie on the Extracellular side of the membrane. C110 and C187 are joined by a disulfide. The chain crosses the membrane as a helical span at residues 111–133 (NFEGFFATLGGEIGLWSLVVLAI). The 'Ionic lock' involved in activated form stabilization signature appears at 134–136 (ERY). At 134–152 (ERYVVVCKPMSNFRFGSQH) the chain is on the cytoplasmic side. Residues 153 to 173 (AFMGVGLTWIMAMACAFPPLV) traverse the membrane as a helical segment. The Extracellular segment spans residues 174-202 (GWSRYIPEGMQCSCGIDYYTLKPEVNNES). A glycan (N-linked (GlcNAc...) asparagine) is linked at N200. A helical membrane pass occupies residues 203 to 224 (FVIYMFVVHFSIPLTIIFFCYG). The Cytoplasmic segment spans residues 225–252 (RLVCTVKEAAAQQQESETTQRAEREVTR). A helical membrane pass occupies residues 253–274 (MVIIMVIAFLICWLPYASVAFF). The Extracellular segment spans residues 275–286 (IFCNQGSEFGPI). The helical transmembrane segment at 287-308 (FMTIPAFFAKAASLYNPLIYIL) threads the bilayer. At K296 the chain carries N6-(retinylidene)lysine. Topologically, residues 309-354 (MNKQFRNCMITTICCGKNPFEEEESTSASASKTEASSVSSSQVAPA) are cytoplasmic. Residues C322 and C323 are each lipidated (S-palmitoyl cysteine). The interval 333-354 (STSASASKTEASSVSSSQVAPA) is disordered. Over residues 334 to 354 (TSASASKTEASSVSSSQVAPA) the composition is skewed to low complexity.

The protein belongs to the G-protein coupled receptor 1 family. Opsin subfamily. In terms of processing, phosphorylated on some or all of the serine and threonine residues present in the C-terminal region. Post-translationally, contains one covalently linked retinal chromophore.

Its subcellular location is the membrane. It localises to the cell projection. The protein localises to the cilium. It is found in the photoreceptor outer segment. Photoreceptor required for image-forming vision at low light intensity. While most salt water fish species use retinal as chromophore, most freshwater fish use 3-dehydroretinal, or a mixture of retinal and 3-dehydroretinal. Light-induced isomerization of 11-cis to all-trans retinal triggers a conformational change that activates signaling via G-proteins. Subsequent receptor phosphorylation mediates displacement of the bound G-protein alpha subunit by arrestin and terminates signaling. The sequence is that of Rhodopsin (rho) from Scyliorhinus canicula (Small-spotted catshark).